The following is a 458-amino-acid chain: Probable mitochondrial chaperone BCS1-B (458 aa).

Residues 1-26 are Mitochondrial intermembrane-facing; it reads MENVITNNNKGLPKSILKFIPEPIQP. A helical transmembrane segment spans residues 27 to 47; sequence LFENPFFSAGFGLIGVGSILA. Residues 48 to 458 lie on the Mitochondrial matrix side of the membrane; sequence MGRKGFQQAM…INNLNELIKK (411 aa). 248–255 serves as a coordination point for ATP; that stretch reads GPPGTGKS.

The protein belongs to the AAA ATPase family. BCS1 subfamily.

It is found in the mitochondrion inner membrane. The catalysed reaction is ATP + H2O = ADP + phosphate + H(+). Its function is as follows. Chaperone necessary for the assembly of mitochondrial respiratory chain complex III. This Dictyostelium discoideum (Social amoeba) protein is Probable mitochondrial chaperone BCS1-B (bcsl1b).